The sequence spans 427 residues: Glutamate-1-semialdehyde 2,1-aminomutase (427 aa).

Lysine 268 bears the N6-(pyridoxal phosphate)lysine mark.

Belongs to the class-III pyridoxal-phosphate-dependent aminotransferase family. HemL subfamily. It depends on pyridoxal 5'-phosphate as a cofactor.

The protein localises to the cytoplasm. The enzyme catalyses (S)-4-amino-5-oxopentanoate = 5-aminolevulinate. The protein operates within porphyrin-containing compound metabolism; protoporphyrin-IX biosynthesis; 5-aminolevulinate from L-glutamyl-tRNA(Glu): step 2/2. The sequence is that of Glutamate-1-semialdehyde 2,1-aminomutase from Methanococcus maripaludis (strain C6 / ATCC BAA-1332).